The sequence spans 159 residues: Endoribonuclease YbeY (159 aa).

His126, His130, and His136 together coordinate Zn(2+).

It belongs to the endoribonuclease YbeY family. Zn(2+) serves as cofactor.

The protein localises to the cytoplasm. In terms of biological role, single strand-specific metallo-endoribonuclease involved in late-stage 70S ribosome quality control and in maturation of the 3' terminus of the 16S rRNA. This chain is Endoribonuclease YbeY, found in Thermodesulfovibrio yellowstonii (strain ATCC 51303 / DSM 11347 / YP87).